The chain runs to 62 residues: uncharacterized protein (62 aa).

This is an uncharacterized protein from Dictyostelium discoideum (Social amoeba).